A 374-amino-acid chain; its full sequence is Coiled-coil domain-containing protein 89 (374 aa).

Positions 1 to 40 are disordered; it reads MRAPMLQKQQAPRMDTPPPEERLEKQNEKLNNQEEETEFK. T16 carries the post-translational modification Phosphothreonine. A compositionally biased stretch (basic and acidic residues) spans 19–32; the sequence is PEERLEKQNEKLNN. Residues 20-351 adopt a coiled-coil conformation; the sequence is EERLEKQNEK…DELRLQSEAF (332 aa).

It belongs to the CCDC89 family. Interacts with HEY1.

The protein localises to the cytoplasm. It is found in the nucleus. The chain is Coiled-coil domain-containing protein 89 (CCDC89) from Homo sapiens (Human).